Reading from the N-terminus, the 62-residue chain is Large ribosomal subunit protein uL30 (62 aa).

The protein belongs to the universal ribosomal protein uL30 family. In terms of assembly, part of the 50S ribosomal subunit.

The chain is Large ribosomal subunit protein uL30 from Halalkalibacterium halodurans (strain ATCC BAA-125 / DSM 18197 / FERM 7344 / JCM 9153 / C-125) (Bacillus halodurans).